The following is a 391-amino-acid chain: Transcription factor TCP3 (391 aa).

The interval 1–34 (MAPDNDHFLDSPSPPLLEMRHHQSATENGGGCGE) is disordered. The region spanning 49-107 (RKDRHSKVCTAKGPRDRRVRLSAPTAIQFYDVQDRLGFDRPSKAVDWLITKAKSAIDDL) is the TCP domain. 3 disordered regions span residues 122 to 168 (HAAA…PASM), 317 to 345 (HHHHHHHQQSMTTDDLHHHHPYHIPPGIH), and 363 to 391 (FRIPARFQGEQEEHGGDNKPSSASSDSRH). A compositionally biased stretch (polar residues) spans 381–391 (KPSSASSDSRH).

Interacts with SPL. Interacts with KIN10; KIN11 and FLZ3. In terms of tissue distribution, expressed in cotyledons, particularly in the vascular region, in leaves, roots, buds, flowers and immature siliques.

The protein resides in the nucleus. Its function is as follows. Plays a pivotal role in the control of morphogenesis of shoot organs by negatively regulating the expression of boundary-specific genes such as CUC genes, probably through the induction of miRNA (e.g. miR164). Participates in ovule development. The protein is Transcription factor TCP3 (TCP3) of Arabidopsis thaliana (Mouse-ear cress).